Here is a 435-residue protein sequence, read N- to C-terminus: Cell adhesion molecule 2 (435 aa).

Positions 1–24 are cleaved as a signal peptide; the sequence is MIWKRSAVLRFYSVCGLLLLGSQG. At 25 to 367 the chain is on the extracellular side; it reads QFPLTQNVTV…SLAGQNGPDH (343 aa). The region spanning 27–119 is the Ig-like V-type domain; it reads PLTQNVTVVE…PVKTSKAYLT (93 aa). N31 and N51 each carry an N-linked (GlcNAc...) asparagine glycan. 3 disulfides stabilise this stretch: C44-C104, C146-C203, and C248-C296. Ig-like C2-type domains are found at residues 127–219 and 227–312; these read PQIS…VAMQ and PSVK…YVLI. A glycan (N-linked (GlcNAc...) asparagine) is linked at N291. Over residues 341–351 the composition is skewed to low complexity; it reads TTSPSTSASSS. The segment at 341–360 is disordered; sequence TTSPSTSASSSSRRDPNSLA. Residues 368–388 traverse the membrane as a helical segment; that stretch reads ALIGGIVAVVVFVTLCSIFLL. The Cytoplasmic portion of the chain corresponds to 389–435; it reads GRYLARHKGTYLTNEAKGAEDAPDADTAIINAEGSQVNAEEKKEYFI. A Phosphoserine modification is found at S423.

Belongs to the nectin family. Glycosylation at Asn-51 reduces adhesive binding.

The protein resides in the cell membrane. It localises to the synapse. It is found in the cell projection. Its subcellular location is the axon. Its function is as follows. Adhesion molecule that engages in homo- and heterophilic interactions with the other nectin-like family members, leading to cell aggregation. Important for synapse organization, providing regulated trans-synaptic adhesion. Preferentially binds to oligodendrocytes. This is Cell adhesion molecule 2 (Cadm2) from Rattus norvegicus (Rat).